The following is a 137-amino-acid chain: Protein MGF 110-7L (137 aa).

The first 20 residues, 1–20 (MLVIILGIIGLLASSNLVSS), serve as a signal peptide directing secretion. 3 N-linked (GlcNAc...) asparagine; by host glycosylation sites follow: Asn-69, Asn-70, and Asn-105.

It belongs to the asfivirus MGF 110 family.

Functionally, plays a role in virus cell tropism, and may be required for efficient virus replication in macrophages. The protein is Protein MGF 110-7L of African swine fever virus (isolate Warthog/Namibia/Wart80/1980) (ASFV).